The following is a 103-amino-acid chain: Large ribosomal subunit protein eL43 (103 aa).

It belongs to the eukaryotic ribosomal protein eL43 family.

The protein is Large ribosomal subunit protein eL43 (RPL37A) of Tetrahymena thermophila (strain SB210).